The primary structure comprises 160 residues: uncharacterized protein (160 aa).

4 helical membrane passes run 7–27 (IFLK…CIFL), 48–68 (LVFI…YQAF), 95–115 (AVTI…MAEI), and 121–141 (IIVI…FAAV).

It is found in the cell membrane. This is an uncharacterized protein from Bacillus subtilis (strain 168).